We begin with the raw amino-acid sequence, 396 residues long: L-cysteine desulfidase (396 aa).

Cysteine 23 acts as the Proton acceptor in catalysis. [4Fe-4S] cluster-binding residues include cysteine 288, cysteine 330, and cysteine 337.

It belongs to the L-cysteine desulfidase family. In terms of assembly, homotrimer. Requires [4Fe-4S] cluster as cofactor.

The catalysed reaction is L-cysteine + H2O = hydrogen sulfide + pyruvate + NH4(+) + H(+). In terms of biological role, catalyzes the cleavage of L-cysteine to form 2-aminoprop-2-enoate and sulfide. The former then spontaneously hydrolyzes to pyruvate and NH(3). May be responsible for the production of sulfide required for the biosynthesis of iron-sulfur centers in this archaea. The protein is L-cysteine desulfidase of Methanococcus maripaludis (strain C6 / ATCC BAA-1332).